A 616-amino-acid polypeptide reads, in one-letter code: Proline dehydrogenase 1, mitochondrial (616 aa).

Belongs to the proline oxidase family. Requires FAD as cofactor.

It is found in the mitochondrion matrix. The enzyme catalyses L-proline + a quinone = (S)-1-pyrroline-5-carboxylate + a quinol + H(+). It functions in the pathway amino-acid degradation; L-proline degradation into L-glutamate; L-glutamate from L-proline: step 1/2. Functionally, converts proline to delta-1-pyrroline-5-carboxylate. Through proline catabolism, promotes reactive oxygen species (ROS) production and the transcription of skn-1 target genes in response to bacterial infection by P.aeruginosa. The sequence is that of Proline dehydrogenase 1, mitochondrial from Caenorhabditis elegans.